Consider the following 429-residue polypeptide: 3-phosphoshikimate 1-carboxyvinyltransferase (429 aa).

Positions 23, 24, and 28 each coordinate 3-phosphoshikimate. A phosphoenolpyruvate-binding site is contributed by Lys23. Phosphoenolpyruvate contacts are provided by Gly95 and Arg123. Residues Ser168, Gln170, Asp316, and Lys343 each coordinate 3-phosphoshikimate. Position 170 (Gln170) interacts with phosphoenolpyruvate. The Proton acceptor role is filled by Asp316. Residues Arg347 and Arg389 each coordinate phosphoenolpyruvate.

This sequence belongs to the EPSP synthase family. Monomer.

It is found in the cytoplasm. The catalysed reaction is 3-phosphoshikimate + phosphoenolpyruvate = 5-O-(1-carboxyvinyl)-3-phosphoshikimate + phosphate. Its pathway is metabolic intermediate biosynthesis; chorismate biosynthesis; chorismate from D-erythrose 4-phosphate and phosphoenolpyruvate: step 6/7. Functionally, catalyzes the transfer of the enolpyruvyl moiety of phosphoenolpyruvate (PEP) to the 5-hydroxyl of shikimate-3-phosphate (S3P) to produce enolpyruvyl shikimate-3-phosphate and inorganic phosphate. The protein is 3-phosphoshikimate 1-carboxyvinyltransferase of Bacillus cereus (strain 03BB102).